Reading from the N-terminus, the 396-residue chain is Diphosphomevalonate decarboxylase (396 aa).

(R)-5-diphosphomevalonate is bound by residues 19 to 22, R74, 153 to 158, and T209; these read YWGK and SGSACR.

This sequence belongs to the diphosphomevalonate decarboxylase family. Homodimer.

The catalysed reaction is (R)-5-diphosphomevalonate + ATP = isopentenyl diphosphate + ADP + phosphate + CO2. Its pathway is isoprenoid biosynthesis; isopentenyl diphosphate biosynthesis via mevalonate pathway; isopentenyl diphosphate from (R)-mevalonate: step 3/3. Diphosphomevalonate decarboxylase; part of the second module of ergosterol biosynthesis pathway that includes the middle steps of the pathway. MVD1/ERG19 converts diphosphomevalonate into isopentenyl diphosphate. The second module is carried out in the vacuole and involves the formation of farnesyl diphosphate, which is also an important intermediate in the biosynthesis of ubiquinone, dolichol, heme and prenylated proteins. Activity by the mevalonate kinase ERG12 first converts mevalonate into 5-phosphomevalonate. 5-phosphomevalonate is then further converted to 5-diphosphomevalonate by the phosphomevalonate kinase ERG8. The diphosphomevalonate decarboxylase MVD1/ERG19 then produces isopentenyl diphosphate. The isopentenyl-diphosphate delta-isomerase IDI1 then catalyzes the 1,3-allylic rearrangement of the homoallylic substrate isopentenyl (IPP) to its highly electrophilic allylic isomer, dimethylallyl diphosphate (DMAPP). Finally the farnesyl diphosphate synthase ERG20 catalyzes the sequential condensation of isopentenyl pyrophosphate with dimethylallyl pyrophosphate, and then with the resultant geranylpyrophosphate to the ultimate product farnesyl pyrophosphate. In Saccharomyces cerevisiae (strain ATCC 204508 / S288c) (Baker's yeast), this protein is Diphosphomevalonate decarboxylase.